The primary structure comprises 890 residues: MTDVTIKTLAAERQTSVERLVQQFADAGIRKSADDSVSAQEKQTLIDHLNQKNSGPDKLTLQRKTRSTLNIPGTGGKSKSVQIEVRKKRTFVKRDPQEAERLAAEEQAQREAEEQARREAEESAKREAQQKAEREAAEQAKREAAEQAKREAAEKDKVSNQQDDMTKNAQAEKARREQEAAELKRKAEEEARRKLEEEARRVAEEARRMAEENKWTDNAEPTEDSSDYHVTTSQHARQAEDESDREVEGGRGRGRNAKAARPKKGNKHAESKADREEARAAVRGGKGGKRKGSSLQQGFQKPAQAVNRDVVIGETITVGELANKMAVKGSQVIKAMMKLGAMATINQVIDQETAQLVAEEMGHKVILRRENELEEAVMSDRDTGAAAEPRAPVVTIMGHVDHGKTSLLDYIRSTKVASGEAGGITQHIGAYHVETENGMITFLDTPGHAAFTSMRARGAQATDIVVLVVAADDGVMPQTIEAIQHAKAAGVPVVVAVNKIDKPEADPDRVKNELSQYGILPEEWGGESQFVHVSAKAGTGIDELLDAILLQAEVLELKAVRKGMASGAVIESFLDKGRGPVATVLVREGTLHKGDIVLCGFEYGRVRAMRNELGQEVLEAGPSIPVEILGLSGVPAAGDEVTVVRDEKKAREVALYRQGKFREVKLARQQKSKLENMFANMTEGEVHEVNIVLKADVQGSVEAISDSLLKLSTDEVKVKIIGSGVGGITETDATLAAASNAILVGFNVRADASARKVIEAESLDLRYYSVIYNLIDEVKAAMSGMLSPELKQQIIGLAEVRDVFKSPKFGAIAGCMVTEGVVKRHNPIRVLRDNVVIYEGELESLRRFKDDVNEVRNGMECGIGVKNYNDVRTGDVIEVFEIIEIQRTIA.

Residues 45–304 (LIDHLNQKNS…LQQGFQKPAQ (260 aa)) are disordered. Residues 67-81 (STLNIPGTGGKSKSV) are compositionally biased toward polar residues. The span at 92–217 (VKRDPQEAER…RMAEENKWTD (126 aa)) shows a compositional bias: basic and acidic residues. Basic residues predominate over residues 252-266 (GRGRNAKAARPKKGN). The span at 267-280 (KHAESKADREEARA) shows a compositional bias: basic and acidic residues. The tr-type G domain maps to 389-558 (PRAPVVTIMG…LLQAEVLELK (170 aa)). Residues 398–405 (GHVDHGKT) are G1. 398–405 (GHVDHGKT) provides a ligand contact to GTP. A G2 region spans residues 423–427 (GITQH). Residues 444–447 (DTPG) form a G3 region. GTP-binding positions include 444-448 (DTPGH) and 498-501 (NKID). Residues 498 to 501 (NKID) are G4. The tract at residues 534 to 536 (SAK) is G5. The residue at position 808 (lysine 808) is an N6-acetyllysine.

This sequence belongs to the TRAFAC class translation factor GTPase superfamily. Classic translation factor GTPase family. IF-2 subfamily.

Its subcellular location is the cytoplasm. One of the essential components for the initiation of protein synthesis. Protects formylmethionyl-tRNA from spontaneous hydrolysis and promotes its binding to the 30S ribosomal subunits. Also involved in the hydrolysis of GTP during the formation of the 70S ribosomal complex. This Escherichia coli O127:H6 (strain E2348/69 / EPEC) protein is Translation initiation factor IF-2.